The chain runs to 233 residues: MSSIQQNIEHITSQIRYDEQKCGRTPESVQLLAVSKTKPVEAILEAYQAGQTAFGENYVQEGVSKVQHFAEHYPDNRIEWHFIGPIQSNKSRLVAEHFDWVHTIDRTKIAQRLNDQRPSELKPLQVLIQVNTSGEASKSGVTEAEVFELAELISRLPNLTLRGLMSIPANVSDYESQLHEFQKLATLKQTLEAQFPEIDTLSMGMSGDMTAAIEAGSTMVRIGTAIFGARDYS.

N6-(pyridoxal phosphate)lysine is present on K36.

Belongs to the pyridoxal phosphate-binding protein YggS/PROSC family.

Its function is as follows. Pyridoxal 5'-phosphate (PLP)-binding protein, which is involved in PLP homeostasis. In Vibrio alginolyticus, this protein is Pyridoxal phosphate homeostasis protein.